The following is a 208-amino-acid chain: Granulocyte colony-stimulating factor (208 aa).

The signal sequence occupies residues 1–30 (MAQLSAQRRMKLMALQLLLWQSALWSGREA). 2 cysteine pairs are disulfide-bonded: Cys72/Cys78 and Cys100/Cys110. Thr169 is a glycosylation site (O-linked (GalNAc...) threonine).

This sequence belongs to the IL-6 superfamily. Monomer. In terms of processing, O-glycosylated.

It localises to the secreted. Functionally, granulocyte/macrophage colony-stimulating factors are cytokines that act in hematopoiesis by controlling the production, differentiation, and function of 2 related white cell populations of the blood, the granulocytes and the monocytes-macrophages. This CSF induces granulocytes. The chain is Granulocyte colony-stimulating factor (Csf3) from Mus musculus (Mouse).